A 4062-amino-acid polypeptide reads, in one-letter code: Transcription-associated protein 1 (4062 aa).

Residues 531–562 (LASEPSTSEDADESGGDPNKLPPPTKEGKKTS) are disordered. TPR repeat units follow at residues 1346–1379 (LDGV…LLDI) and 1677–1714 (RRSF…DDEE). The span at 2659 to 2670 (VETEMKREEPEP) shows a compositional bias: basic and acidic residues. The tract at residues 2659–2692 (VETEMKREEPEPMEVDEKDSQDDSKDAGEPKEKE) is disordered. The span at 2671-2680 (MEVDEKDSQD) shows a compositional bias: acidic residues. Residues 2681-2692 (DSKDAGEPKEKE) are compositionally biased toward basic and acidic residues. Residues 2800–3411 (LIEFISSKHE…FYHIREAVSV (612 aa)) enclose the FAT domain. A TPR 3 repeat occupies 2847–2880 (IETLESLGTLYNEISEFDQFAAIWERRAVFPDTM). The PI3K/PI4K catalytic domain occupies 3682–4046 (EPNFEIVIKG…DCVSLISRAK (365 aa)). Residues 3688–3694 (VIKGGQV) form a G-loop region. Residues 3902–3910 (NLTPMGPDQ) form a catalytic loop region. Residues 3922–3950 (NPSYRFEIRGGRSLHDIQHFGHEVPFRLT) form an activation loop region. The region spanning 4031–4062 (AKLRKDDCVSLISRAKDSDNLARMPPTYHAWF) is the FATC domain.

This sequence belongs to the PI3/PI4-kinase family. TRA1 subfamily. As to quaternary structure, interacts with histone acetyltransferase Tip60 homolog mys-1. Probably a component of a complex with histone acetyltransferase (HAT) activity, at least composed of mys-1 and trr-1. In terms of tissue distribution, expressed in germ cells and somatic cells.

It localises to the nucleus. It is found in the chromosome. In terms of biological role, influences germ cell fate in hermaphrodites. Acts downstream of tra-2 and tra-3 and through the Tip60 histone acetyltransferase complex to regulate germ cell fate decisions. Required for spermatogenesis and embryonic development. Acts with tra-2 to promote expression of fog-3 and control male tail development. Involved in the negative regulation of vulval development. Involved in the positive regulation of transcription factor daf-16, probably acting by histone acetylation; thereby modulating stress resistance. Plays a role in acetylation of nucleosomal histone H4, probably acting as a component of the Tip60 histone acetyltransferase complex. This chain is Transcription-associated protein 1, found in Caenorhabditis elegans.